Consider the following 185-residue polypeptide: UPF0200 protein Mevan_0592 (185 aa).

Position 8 to 15 (8 to 15) interacts with ATP; sequence GMPGSGKS.

Belongs to the UPF0200 family.

The polypeptide is UPF0200 protein Mevan_0592 (Methanococcus vannielii (strain ATCC 35089 / DSM 1224 / JCM 13029 / OCM 148 / SB)).